A 327-amino-acid chain; its full sequence is 2-phosphoglycerate kinase (327 aa).

A compositionally biased stretch (basic and acidic residues) spans 1–20 (MSEKSSRKERDEKTEKETAR). Residues 1–27 (MSEKSSRKERDEKTEKETARQGKHRRI) form a disordered region. The ATP-cone domain occupies 25–111 (RRIRVKSRHY…LWRRIKKREE (87 aa)).

The protein belongs to the 2-phosphoglycerate kinase family. The cofactor is a divalent metal cation.

The enzyme catalyses (2R)-2-phosphoglycerate + ATP = (2R)-2,3-bisphosphoglycerate + ADP + H(+). It participates in thermoadapter biosynthesis; cyclic 2,3-diphosphoglycerate biosynthesis; cyclic 2,3-diphosphoglycerate from 2-phospho-D-glycerate: step 1/2. Its function is as follows. Catalyzes the phosphorylation of 2-phosphoglycerate to 2,3-diphosphoglycerate. Involved in the biosynthesis of cyclic 2,3-bisphosphoglycerate, a thermoprotectant. This is 2-phosphoglycerate kinase from Methanopyrus kandleri (strain AV19 / DSM 6324 / JCM 9639 / NBRC 100938).